We begin with the raw amino-acid sequence, 145 residues long: D-aminoacyl-tRNA deacylase (145 aa).

The Gly-cisPro motif, important for rejection of L-amino acids motif lies at 137–138; it reads GP.

The protein belongs to the DTD family. Homodimer.

The protein localises to the cytoplasm. The catalysed reaction is glycyl-tRNA(Ala) + H2O = tRNA(Ala) + glycine + H(+). It carries out the reaction a D-aminoacyl-tRNA + H2O = a tRNA + a D-alpha-amino acid + H(+). Functionally, an aminoacyl-tRNA editing enzyme that deacylates mischarged D-aminoacyl-tRNAs. Also deacylates mischarged glycyl-tRNA(Ala), protecting cells against glycine mischarging by AlaRS. Acts via tRNA-based rather than protein-based catalysis; rejects L-amino acids rather than detecting D-amino acids in the active site. By recycling D-aminoacyl-tRNA to D-amino acids and free tRNA molecules, this enzyme counteracts the toxicity associated with the formation of D-aminoacyl-tRNA entities in vivo and helps enforce protein L-homochirality. The chain is D-aminoacyl-tRNA deacylase from Pseudomonas syringae pv. tomato (strain ATCC BAA-871 / DC3000).